The sequence spans 428 residues: MLDIRLIRKEPKECESRLQKKDPAISLERLLDLDKTVRQLKADSEALLAKRKVLSGQIHKAKVANENADALIQEVNTIADQLVAFETTLQEQEALLEDLMARLPNYPDEDVPVSPDKTGNQVIKGHGEVPTFPFPPKHHMQLNEALQILDFKLPAKTTGSGWPAYCNEGVLLEWALLTYLLNKQQAHGFQLWLPPLLVKRDILFGSGQIPKFDGQYYRVEDGDQSLFLIPTAEVVLNGFHSQEILNEQDLPLCYAAFTPCFRREAGAGGAHERGLVRVHQFHKVEMFAFTTPEQEEVVYQKMLHVVEEILSELQLPYQLSLLSTGDMSFTAKKTIDAEVWLPGQKAFYEVSSISKCGDFQARRSETRYRDAQGKLHFVNTLNGSGLATPRLLVAILENYQQADGSVVIPSVLRPYMNNQEILLPKTVR.

231–233 contributes to the L-serine binding site; that stretch reads TAE. Residues 262-264 and V278 contribute to the ATP site; that span reads RRE. E285 contacts L-serine. ATP is bound at residue 349-352; the sequence is EVSS. L-serine is bound at residue S384.

It belongs to the class-II aminoacyl-tRNA synthetase family. Type-1 seryl-tRNA synthetase subfamily. Homodimer. The tRNA molecule binds across the dimer.

The protein resides in the cytoplasm. The catalysed reaction is tRNA(Ser) + L-serine + ATP = L-seryl-tRNA(Ser) + AMP + diphosphate + H(+). It catalyses the reaction tRNA(Sec) + L-serine + ATP = L-seryl-tRNA(Sec) + AMP + diphosphate + H(+). It functions in the pathway aminoacyl-tRNA biosynthesis; selenocysteinyl-tRNA(Sec) biosynthesis; L-seryl-tRNA(Sec) from L-serine and tRNA(Sec): step 1/1. Its function is as follows. Catalyzes the attachment of serine to tRNA(Ser). Is also able to aminoacylate tRNA(Sec) with serine, to form the misacylated tRNA L-seryl-tRNA(Sec), which will be further converted into selenocysteinyl-tRNA(Sec). This is Serine--tRNA ligase from Chlamydia trachomatis serovar A (strain ATCC VR-571B / DSM 19440 / HAR-13).